The chain runs to 606 residues: EPM2A-interacting protein 1 (606 aa).

Ser147 is subject to Phosphoserine.

Interacts with EPM2A.

It is found in the endoplasmic reticulum. This chain is EPM2A-interacting protein 1 (Epm2aip1), found in Mus musculus (Mouse).